The following is a 257-amino-acid chain: Hydroxyacylglutathione hydrolase (257 aa).

Zn(2+) contacts are provided by His54, His56, Asp58, His59, His113, Asp137, and His175.

The protein belongs to the metallo-beta-lactamase superfamily. Glyoxalase II family. Monomer. Zn(2+) serves as cofactor.

It catalyses the reaction an S-(2-hydroxyacyl)glutathione + H2O = a 2-hydroxy carboxylate + glutathione + H(+). Its pathway is secondary metabolite metabolism; methylglyoxal degradation; (R)-lactate from methylglyoxal: step 2/2. Its function is as follows. Thiolesterase that catalyzes the hydrolysis of S-D-lactoyl-glutathione to form glutathione and D-lactic acid. This Rippkaea orientalis (strain PCC 8801 / RF-1) (Cyanothece sp. (strain PCC 8801)) protein is Hydroxyacylglutathione hydrolase.